A 389-amino-acid chain; its full sequence is Packaging protein 3 (389 aa).

The segment at 1–131 is interaction with packaging protein 1; that stretch reads MHPVLRQMKP…VKAEVNFQTT (131 aa). Residues 350–389 are disordered; that stretch reads EKENPDGSVSFQQHERGTQSHENGGHAEPAYSRRQLGRFY. Residues 362 to 374 are compositionally biased toward basic and acidic residues; it reads QHERGTQSHENGG.

The protein belongs to the adenoviridae packaging protein 3 family. Part of the genome packaging complex composed of packaging proteins 1, 2 and 3; this complex specifically binds to the packaging sequence on the left end of viral genomic DNA and performs packaging of the viral genome. Interacts with hexon-linking protein IIIa; this interaction is required to promote correct genome packaging. Post-translationally, cleaved at different sites by the viral protease during virion maturation.

Its subcellular location is the host nucleus. Involved in viral genome packaging through its interaction with packaging proteins 1 and 2. After proteolytic cleavage by adenovirus protease, L1 52/55k protein is removed from the capsid during viral maturation. The sequence is that of Packaging protein 3 from Canine adenovirus serotype 1 (strain CLL) (CAdV-1).